We begin with the raw amino-acid sequence, 92 residues long: Small ribosomal subunit protein uS19 (92 aa).

This sequence belongs to the universal ribosomal protein uS19 family.

Its function is as follows. Protein S19 forms a complex with S13 that binds strongly to the 16S ribosomal RNA. The polypeptide is Small ribosomal subunit protein uS19 (Malacoplasma penetrans (strain HF-2) (Mycoplasma penetrans)).